Here is a 299-residue protein sequence, read N- to C-terminus: 4-sulfomuconolactone hydrolase (299 aa).

It belongs to the metallo-dependent hydrolases superfamily. Sulfomuconolactone hydrolase family. As to quaternary structure, monomer. It depends on Zn(2+) as a cofactor.

It carries out the reaction 4-sulfomuconolactone + H2O = maleylacetate + sulfite + 2 H(+). Involved in the degradation of 4-sulfocatechol which is a central intermediate in the degradation of substituted sulfonated benzenes. Catalyzes the hydrolytical desulfonation of 4-sulfomuconolactone to yield maleylacetate. This chain is 4-sulfomuconolactone hydrolase, found in Rhizobium radiobacter (Agrobacterium tumefaciens).